Consider the following 522-residue polypeptide: Peptide chain release factor 3 (522 aa).

A tr-type G domain is found at 10–277 (ASRKTFAIIS…TFVDFAPSPS (268 aa)). GTP contacts are provided by residues 19 to 26 (SHPDAGKT), 87 to 91 (DTPGH), and 141 to 144 (NKMD).

Belongs to the TRAFAC class translation factor GTPase superfamily. Classic translation factor GTPase family. PrfC subfamily.

Its subcellular location is the cytoplasm. Functionally, increases the formation of ribosomal termination complexes and stimulates activities of RF-1 and RF-2. It binds guanine nucleotides and has strong preference for UGA stop codons. It may interact directly with the ribosome. The stimulation of RF-1 and RF-2 is significantly reduced by GTP and GDP, but not by GMP. The chain is Peptide chain release factor 3 from Listeria monocytogenes serotype 4b (strain F2365).